The following is a 238-amino-acid chain: Purine nucleoside phosphorylase DeoD-type (238 aa).

Position 5 (His-5) interacts with a purine D-ribonucleoside. Residues Gly-21, Arg-25, Arg-44, and 88 to 91 (RIGS) contribute to the phosphate site. A purine D-ribonucleoside is bound by residues 180 to 182 (EME) and 204 to 205 (SD). Asp-205 (proton donor) is an active-site residue.

This sequence belongs to the PNP/UDP phosphorylase family. As to quaternary structure, homohexamer; trimer of homodimers.

The enzyme catalyses a purine D-ribonucleoside + phosphate = a purine nucleobase + alpha-D-ribose 1-phosphate. It carries out the reaction a purine 2'-deoxy-D-ribonucleoside + phosphate = a purine nucleobase + 2-deoxy-alpha-D-ribose 1-phosphate. Its function is as follows. Catalyzes the reversible phosphorolytic breakdown of the N-glycosidic bond in the beta-(deoxy)ribonucleoside molecules, with the formation of the corresponding free purine bases and pentose-1-phosphate. The chain is Purine nucleoside phosphorylase DeoD-type from Xenorhabdus nematophila (strain ATCC 19061 / DSM 3370 / CCUG 14189 / LMG 1036 / NCIMB 9965 / AN6).